The chain runs to 416 residues: Lysosome-associated membrane glycoprotein 3 (416 aa).

The N-terminal stretch at 1 to 27 (MPRQLSAAAALFASLAVILHDGSQMRA) is a signal peptide. The Lumenal segment spans residues 28–381 (KAFPETRDYS…NVDECSSDYT (354 aa)). 7 N-linked (GlcNAc...) asparagine glycosylation sites follow: N112, N158, N164, N200, N232, N266, and N291. 2 disordered regions span residues 136–167 (PTIT…NQTT) and 179–219 (STTG…LAPQ). The segment covering 143–160 (HTTGTSSSTVSHTTGNTT) has biased composition (low complexity). Low complexity predominate over residues 188–208 (PTHAPGTTAAAHNTTRTAAPA). A disulfide bond links C237 and C274. C339 and C376 form a disulfide bridge. Residues 382–402 (IVLPVIGAIVVGLCLMGMGVY) traverse the membrane as a helical segment. The Cytoplasmic portion of the chain corresponds to 403–416 (KIRLRCQSSGYQRI).

It belongs to the LAMP family. Monomer. Interacts with FURIN. In terms of assembly, (Microbial infection) Interacts with mumps virus protein F; this interaction promotes protein F cleavage by FURIN. In terms of tissue distribution, detected in tonsil interdigitating dendritic cells, in spleen, lymph node, Peyer's patches in the small instestine, in thymus medulla and in B-cells (at protein level). Expressed in lymphoid organs and dendritic cells. Expressed in lung. Up-regulated in carcinomas of the esophagus, colon, rectum, ureter, stomach, breast, fallopian tube, thyroid and parotid tissues.

It is found in the cell surface. It localises to the lysosome membrane. Its subcellular location is the cytoplasmic vesicle membrane. The protein localises to the early endosome membrane. Lysosomal membrane glycoprotein which plays a role in the unfolded protein response (UPR) that contributes to protein degradation and cell survival during proteasomal dysfunction. Plays a role in the process of fusion of the lysosome with the autophagosome, thereby modulating the autophagic process. Promotes hepatocellular lipogenesis through activation of the PI3K/Akt pathway. May also play a role in dendritic cell function and in adaptive immunity. Its function is as follows. (Microbial infection) Plays a positive role in post-entry steps of influenza A virus replication, either virus uncoating, cytosolic transport, or nuclear import of viral components, and promotes nuclear accumulation of influenza nucleoprotein/NP at early stages of viral infection. Functionally, (Microbial infection) Supports the FURIN-mediated cleavage of mumps virus fusion protein F by interacting with both FURIN and the unprocessed form but not the processed form of the viral protein F. In terms of biological role, (Microbial infection) Promotes the intracellular proliferation of Salmonella typhimuium. The polypeptide is Lysosome-associated membrane glycoprotein 3 (LAMP3) (Homo sapiens (Human)).